Consider the following 88-residue polypeptide: ADDKNPLEECFREDDYEEFLEIAKNGLKKTSNPKHIVYPVKPSEQLYEESLRDQLPTSMHRYPSMIQKIFFAGEYTANAHGWIDSTIK.

Residues Glu74 and 81 to 86 contribute to the FAD site; that span reads GWIDST. 81 to 82 contributes to the substrate binding site; it reads GW.

It belongs to the flavin monoamine oxidase family. FIG1 subfamily. In terms of assembly, homodimer; non-covalently linked. FAD serves as cofactor. In terms of processing, N-glycosylated. Expressed by the venom gland.

Its subcellular location is the secreted. It carries out the reaction an L-alpha-amino acid + O2 + H2O = a 2-oxocarboxylate + H2O2 + NH4(+). The catalysed reaction is L-leucine + O2 + H2O = 4-methyl-2-oxopentanoate + H2O2 + NH4(+). It catalyses the reaction L-phenylalanine + O2 + H2O = 3-phenylpyruvate + H2O2 + NH4(+). The enzyme catalyses L-tryptophan + O2 + H2O = indole-3-pyruvate + H2O2 + NH4(+). It carries out the reaction L-methionine + O2 + H2O = 4-methylsulfanyl-2-oxobutanoate + H2O2 + NH4(+). The catalysed reaction is L-isoleucine + O2 + H2O = (S)-3-methyl-2-oxopentanoate + H2O2 + NH4(+). It catalyses the reaction L-arginine + O2 + H2O = 5-guanidino-2-oxopentanoate + H2O2 + NH4(+). The enzyme catalyses L-histidine + O2 + H2O = 3-(imidazol-5-yl)pyruvate + H2O2 + NH4(+). It carries out the reaction L-asparagine + O2 + H2O = 2-oxosuccinamate + H2O2 + NH4(+). The catalysed reaction is L-valine + O2 + H2O = 3-methyl-2-oxobutanoate + H2O2 + NH4(+). It catalyses the reaction L-glutamate + O2 + H2O = H2O2 + 2-oxoglutarate + NH4(+). In terms of biological role, catalyzes an oxidative deamination of predominantly hydrophobic and aromatic L-amino acids, thus producing hydrogen peroxide that may contribute to the diverse toxic effects of this enzyme. Is highly active on L-Met, L-Leu, L-Phe, L-Ile, and L-Arg, moderately active on L-His, L-Trp, L-Asn, L-Glu, and L-Val, and weakly or not active on L-Gln, L-Lys, L-Asp, L-Ala, L-Tyr, L-Ser, L-Pro, L-Gly, L-Thr, and L-Cys. Exhibits diverse biological activities, such as hemorrhage, hemolysis, edema, apoptosis of vascular endothelial cells or tumor cell lines, antibacterial and antiparasitic activities. In addition, this protein has an ability to induce apoptosis in cultured HeLa and K562 cells, and inhibits ADP-induced platelet aggregation dose-dependently. Effects of snake L-amino oxidases on platelets are controversial, since they either induce aggregation or inhibit agonist-induced aggregation. These different effects are probably due to different experimental conditions. This Vipera berus berus (Common viper) protein is L-amino-acid oxidase.